The following is a 396-amino-acid chain: Probable sugar efflux transporter (396 aa).

Helical transmembrane passes span 15-35, 50-70, 81-101, 103-123, 136-156, 169-189, 202-222, 246-266, 275-295, 301-321, 333-353, and 364-384; these read VVTL…PVGL, VGIM…PFML, LICL…AWNF, VLVI…SITA, AQAL…GLPI, TFFA…KLLP, LPLL…VVVV, FATV…LVFG, SLVS…LPAA, LAIL…GMQV, VAMA…ALVG, and AIGY…VLIF.

Belongs to the major facilitator superfamily. SotB (TC 2.A.1.2) family.

The protein resides in the cell inner membrane. Its function is as follows. Involved in the efflux of sugars. The physiological role may be the reduction of the intracellular concentration of toxic sugars or sugar metabolites. This Salmonella paratyphi A (strain ATCC 9150 / SARB42) protein is Probable sugar efflux transporter.